A 328-amino-acid chain; its full sequence is Ribosomal RNA small subunit methyltransferase H (328 aa).

S-adenosyl-L-methionine contacts are provided by residues 37–39 (GGH), D57, F83, D104, and Q111.

It belongs to the methyltransferase superfamily. RsmH family.

The protein resides in the cytoplasm. It carries out the reaction cytidine(1402) in 16S rRNA + S-adenosyl-L-methionine = N(4)-methylcytidine(1402) in 16S rRNA + S-adenosyl-L-homocysteine + H(+). Functionally, specifically methylates the N4 position of cytidine in position 1402 (C1402) of 16S rRNA. The polypeptide is Ribosomal RNA small subunit methyltransferase H (Neisseria meningitidis serogroup B (strain ATCC BAA-335 / MC58)).